A 171-amino-acid chain; its full sequence is S-ribosylhomocysteine lyase (171 aa).

Residues His54, His58, and Cys128 each contribute to the Fe cation site.

This sequence belongs to the LuxS family. In terms of assembly, homodimer. It depends on Fe cation as a cofactor.

It carries out the reaction S-(5-deoxy-D-ribos-5-yl)-L-homocysteine = (S)-4,5-dihydroxypentane-2,3-dione + L-homocysteine. Involved in the synthesis of autoinducer 2 (AI-2) which is secreted by bacteria and is used to communicate both the cell density and the metabolic potential of the environment. The regulation of gene expression in response to changes in cell density is called quorum sensing. Catalyzes the transformation of S-ribosylhomocysteine (RHC) to homocysteine (HC) and 4,5-dihydroxy-2,3-pentadione (DPD). The chain is S-ribosylhomocysteine lyase from Yersinia pseudotuberculosis serotype O:1b (strain IP 31758).